The chain runs to 174 residues: Extracellular cysteine protease (174 aa).

Catalysis depends on residues C24, H120, and N141.

It belongs to the peptidase C47 family. Post-translationally, proteolytically cleaved.

The protein resides in the secreted. It localises to the cell wall. Its activity is regulated as follows. Inhibited by heavy metal ions such as Zn(2+) or Ni(2+), iodoacetamide, N-ethylmaleimide, leupeptin, SDS and E-64. Also inhibited by chloromethylketones TPCK and TLCK and by human plasma inhibitor alpha-2-macroglobulin. Stimulated by L-cysteine. Functionally, cysteine protease able to cleave elastin, insulin, myoglobin, fibronectin, fibrinogen, HMW-kininogen, alpha-1-protease inhibitor and alpha-1-antitrypsin. Along with other extracellular proteases may contribute to the colonization and infection of human tissues. In Staphylococcus epidermidis, this protein is Extracellular cysteine protease (ecpA).